We begin with the raw amino-acid sequence, 424 residues long: UDP-N-acetylglucosamine 1-carboxyvinyltransferase (424 aa).

22 to 23 contributes to the phosphoenolpyruvate binding site; it reads KN. Residue Arg-93 coordinates UDP-N-acetyl-alpha-D-glucosamine. The active-site Proton donor is Cys-117. Cys-117 carries the 2-(S-cysteinyl)pyruvic acid O-phosphothioketal modification. Residues 162–165, Asp-307, and Ile-329 contribute to the UDP-N-acetyl-alpha-D-glucosamine site; that span reads KVSV.

Belongs to the EPSP synthase family. MurA subfamily.

Its subcellular location is the cytoplasm. The catalysed reaction is phosphoenolpyruvate + UDP-N-acetyl-alpha-D-glucosamine = UDP-N-acetyl-3-O-(1-carboxyvinyl)-alpha-D-glucosamine + phosphate. It functions in the pathway cell wall biogenesis; peptidoglycan biosynthesis. Its function is as follows. Cell wall formation. Adds enolpyruvyl to UDP-N-acetylglucosamine. The chain is UDP-N-acetylglucosamine 1-carboxyvinyltransferase from Actinobacillus pleuropneumoniae serotype 5b (strain L20).